The following is an 84-amino-acid chain: Elongation factor 1-beta (84 aa).

The protein belongs to the EF-1-beta/EF-1-delta family.

Promotes the exchange of GDP for GTP in EF-1-alpha/GDP, thus allowing the regeneration of EF-1-alpha/GTP that could then be used to form the ternary complex EF-1-alpha/GTP/AAtRNA. This Methanoculleus marisnigri (strain ATCC 35101 / DSM 1498 / JR1) protein is Elongation factor 1-beta.